The primary structure comprises 244 residues: Small ribosomal subunit protein uS2 (244 aa).

It belongs to the universal ribosomal protein uS2 family.

The chain is Small ribosomal subunit protein uS2 from Hydrogenovibrio crunogenus (strain DSM 25203 / XCL-2) (Thiomicrospira crunogena).